The following is a 431-amino-acid chain: Trigger factor (431 aa).

One can recognise a PPIase FKBP-type domain in the interval 165 to 250; sequence GDTVVIDFDG…IHELKRKELP (86 aa).

The protein belongs to the FKBP-type PPIase family. Tig subfamily.

It localises to the cytoplasm. It carries out the reaction [protein]-peptidylproline (omega=180) = [protein]-peptidylproline (omega=0). In terms of biological role, involved in protein export. Acts as a chaperone by maintaining the newly synthesized protein in an open conformation. Functions as a peptidyl-prolyl cis-trans isomerase. This is Trigger factor from Leuconostoc mesenteroides subsp. mesenteroides (strain ATCC 8293 / DSM 20343 / BCRC 11652 / CCM 1803 / JCM 6124 / NCDO 523 / NBRC 100496 / NCIMB 8023 / NCTC 12954 / NRRL B-1118 / 37Y).